The following is an 89-amino-acid chain: RNA-binding protein Hfq (89 aa).

Residues 9–68 enclose the Sm domain; sequence EPFLNALRKEKVPVSIYLVNGIKLQGQIESFDQFVILLRNNVNQMVYKHAISTVVPARNV. The segment at 70 to 89 is disordered; it reads TAPPVPTETHAQSSEEFGNI. The segment covering 78–89 has biased composition (polar residues); that stretch reads THAQSSEEFGNI.

The protein belongs to the Hfq family. In terms of assembly, homohexamer.

Functionally, RNA chaperone that binds small regulatory RNA (sRNAs) and mRNAs to facilitate mRNA translational regulation in response to envelope stress, environmental stress and changes in metabolite concentrations. Also binds with high specificity to tRNAs. The sequence is that of RNA-binding protein Hfq from Alkalilimnicola ehrlichii (strain ATCC BAA-1101 / DSM 17681 / MLHE-1).